Here is a 373-residue protein sequence, read N- to C-terminus: UDP-3-O-acylglucosamine N-acyltransferase 2 (373 aa).

His-257 acts as the Proton acceptor in catalysis. The tract at residues 346 to 373 (DGRTAASAEAAAPSSDATGVDQPDQAAS) is disordered. The span at 350 to 362 (AASAEAAAPSSDA) shows a compositional bias: low complexity.

The protein belongs to the transferase hexapeptide repeat family. LpxD subfamily. Homotrimer.

It carries out the reaction a UDP-3-O-[(3R)-3-hydroxyacyl]-alpha-D-glucosamine + a (3R)-hydroxyacyl-[ACP] = a UDP-2-N,3-O-bis[(3R)-3-hydroxyacyl]-alpha-D-glucosamine + holo-[ACP] + H(+). It participates in bacterial outer membrane biogenesis; LPS lipid A biosynthesis. In terms of biological role, catalyzes the N-acylation of UDP-3-O-acylglucosamine using 3-hydroxyacyl-ACP as the acyl donor. Is involved in the biosynthesis of lipid A, a phosphorylated glycolipid that anchors the lipopolysaccharide to the outer membrane of the cell. The protein is UDP-3-O-acylglucosamine N-acyltransferase 2 of Rhodopseudomonas palustris (strain BisB18).